We begin with the raw amino-acid sequence, 468 residues long: FAD-linked oxidoreductase azaG (468 aa).

An N-terminal signal peptide occupies residues 1 to 16 (MQLSGILSWLLSWLWA). N-linked (GlcNAc...) asparagine glycosylation occurs at asparagine 44. In terms of domain architecture, FAD-binding PCMH-type spans 54–228 (TVHGAPHYLG…TSATYRTHQA (175 aa)). N-linked (GlcNAc...) asparagine glycosylation is found at asparagine 272, asparagine 348, and asparagine 464.

The protein belongs to the oxygen-dependent FAD-linked oxidoreductase family. The cofactor is FAD.

The protein operates within secondary metabolite biosynthesis. Functionally, FAD-linked oxidoreductase; part of the gene cluster that mediates the biosynthesis of azaphilones, a class of fungal metabolites characterized by a highly oxygenated pyrano-quinone bicyclic core and exhibiting a broad range of bioactivities. In the first step, the non-reducing polyketide synthase azaA forms the hexaketide precursor from successive condensations of five malonyl-CoA units, presumably with a simple acetyl-CoA starter unit. The reactive polyketide chain then undergoes a PT-mediated C2-C7 cyclization to afford the aromatic ring and is eventually released as an aldehyde through the R-domain. The putative ketoreductase azaE is proposed to catalyze the reduction of the terminal ketone resulting in the early culture product FK17-P2a. The monooxygenase azaH was demonstrated to be the only enzyme required to convert FK17-P2a to azanigerone E. AzaH first hydroxylates the benzaldehyde intermediate FK17-P2a at C4, which triggers the formation of the pyran-ring to afford azanigerone E. In parallel, the 2,4-dimethylhexanoyl chain is synthesized by the HR-PKS azaB and is proposed to be transferred to the C4-hydroxyl of azanigerone E by the acyltransferase azaD directly from the ACP domain of azaB. Alternatively, the 2,4-dimethyl-hexanoyl chain may be offloaded from the HR-PKS as a carboxylic acid and converted to an acyl-CoA by azaF. The resulting acyl-CoA molecule could then be taken up as a substrate by AzaD to form azanigerone B. To yield the carboxylic acid substituent in azanigerone A, the hydroxypropyl side chain of azanigerone B would need to undergo a C-C oxidative cleavage catalyzed by cytochrome P450 AzaI. AzaI is proposed to act on a vicinal diol that leads to a C-C bond scission either through an alkoxyradical intermediate or a peroxy complex. In the biosynthesis of azanigerone A, azanigerone B first undergoes hydroxylation at C10, possibly catalyzed by one of the two FAD-dependent monooxygenases encoded in the cluster, azaG or azaL, resulting in the vicinal diol azanigerone C. Oxidative cleavage of azanigerone C by azaI would yield the corresponding aldehyde derivative of azanigerone A. Finally, the dehydrogenase azaJ is proposed to convert the aldehyde functional group into the carboxylic acid, completing the conversion from azanigerone B to azanigerone A. Alternatively, the oxidation of aldehyde to carboxylic acid may be catalyzed by the same P450 enzyme azaI via consecutive oxidation or by endogenous alcohol dehydrogenase. The polypeptide is FAD-linked oxidoreductase azaG (Aspergillus niger (strain ATCC 1015 / CBS 113.46 / FGSC A1144 / LSHB Ac4 / NCTC 3858a / NRRL 328 / USDA 3528.7)).